A 129-amino-acid chain; its full sequence is Snaclec coagulation factor IX-binding protein subunit A (129 aa).

Positions 1 to 129 constitute a C-type lectin domain; sequence DCPSGWSSYE…GQQNPFVCEA (129 aa). 3 cysteine pairs are disulfide-bonded: C2–C13, C30–C127, and C102–C119. Residues S41, E43, and E47 each contribute to the Ca(2+) site. Position 128 (E128) interacts with Ca(2+).

It belongs to the snaclec family. As to quaternary structure, heterodimer of subunits A and B; disulfide-linked. Expressed by the venom gland.

The protein localises to the secreted. Its function is as follows. Anticoagulant protein which binds to the gamma-carboxyglutamic acid-domain regions of factor IX (F9) (but not factor X) in the presence of calcium with a 1 to 1 stoichiometry. The chain is Snaclec coagulation factor IX-binding protein subunit A from Protobothrops flavoviridis (Habu).